We begin with the raw amino-acid sequence, 138 residues long: MLIPRRVKHRKQHHPKRSGAAKGGTTVTFGEWGIQALTPAYVTNRQIEAARIAMTRYIKRGGKVWINIYPDRPITKKPAETRMGSGKGSPEWWVANVKPGRVLFELSGVTEDVAREALRLAIHKLPLKARIIRREGGE.

Residues 1-19 are compositionally biased toward basic residues; it reads MLIPRRVKHRKQHHPKRSG. Residues 1 to 24 form a disordered region; sequence MLIPRRVKHRKQHHPKRSGAAKGG.

Belongs to the universal ribosomal protein uL16 family. In terms of assembly, part of the 50S ribosomal subunit.

Functionally, binds 23S rRNA and is also seen to make contacts with the A and possibly P site tRNAs. This Micrococcus luteus (strain ATCC 4698 / DSM 20030 / JCM 1464 / CCM 169 / CCUG 5858 / IAM 1056 / NBRC 3333 / NCIMB 9278 / NCTC 2665 / VKM Ac-2230) (Micrococcus lysodeikticus) protein is Large ribosomal subunit protein uL16.